Here is a 143-residue protein sequence, read N- to C-terminus: Transcriptional regulator SlyA (143 aa).

The region spanning Glu-2–Gln-135 is the HTH marR-type domain. Positions Gln-49 to Asp-72 form a DNA-binding region, H-T-H motif.

The protein belongs to the SlyA family. In terms of assembly, homodimer.

Functionally, transcription regulator that can specifically activate or repress expression of target genes. The protein is Transcriptional regulator SlyA of Edwardsiella ictaluri (strain 93-146).